A 220-amino-acid chain; its full sequence is UPF0319 protein YccT (220 aa).

The signal sequence occupies residues 1 to 20; it reads MKTGALATFLALCLPATVFA.

The protein belongs to the UPF0319 family.

This Salmonella heidelberg (strain SL476) protein is UPF0319 protein YccT.